We begin with the raw amino-acid sequence, 389 residues long: Acetate kinase (389 aa).

Asn-7 provides a ligand contact to Mg(2+). An ATP-binding site is contributed by Lys-14. Arg-88 contributes to the substrate binding site. Asp-145 acts as the Proton donor/acceptor in catalysis. ATP is bound by residues His-205–Gly-209, Asp-279–Arg-281, and Gly-324–Asn-328. Glu-375 lines the Mg(2+) pocket.

Belongs to the acetokinase family. Homodimer. Requires Mg(2+) as cofactor. Mn(2+) is required as a cofactor.

The protein localises to the cytoplasm. It catalyses the reaction acetate + ATP = acetyl phosphate + ADP. It participates in metabolic intermediate biosynthesis; acetyl-CoA biosynthesis; acetyl-CoA from acetate: step 1/2. Catalyzes the formation of acetyl phosphate from acetate and ATP. Can also catalyze the reverse reaction. This is Acetate kinase from Sulfurimonas denitrificans (strain ATCC 33889 / DSM 1251) (Thiomicrospira denitrificans (strain ATCC 33889 / DSM 1251)).